The chain runs to 257 residues: MGKTIVIKCGGSVLSDLSPSFFTSLQEMYAQGMNIVLVHGGGPEIGQMLKRLNVPSEFVNGLRKTTKEVLEVAEMVLAGKVNKQLVALLRQHGLPAVGVSGVDACLLQAAPIDLAKLGYVGEVVNVNADFVHQLLKSRYIPIISPIGADKDGQKYNINADTAAGAVAKAIKAAQLLFVTDVPGILRNGSIVEQATIDVIERMMNEGIITGGMIPKVKAAIAALSESLHEVMIVSGKTPFYENGQLHGTTIRNEVGVY.

Substrate contacts are provided by residues 41-42 (GG), R63, and N156.

This sequence belongs to the acetylglutamate kinase family. ArgB subfamily.

The protein localises to the cytoplasm. The enzyme catalyses N-acetyl-L-glutamate + ATP = N-acetyl-L-glutamyl 5-phosphate + ADP. It participates in amino-acid biosynthesis; L-arginine biosynthesis; N(2)-acetyl-L-ornithine from L-glutamate: step 2/4. Catalyzes the ATP-dependent phosphorylation of N-acetyl-L-glutamate. This chain is Acetylglutamate kinase, found in Geobacillus sp. (strain WCH70).